The primary structure comprises 411 residues: MYTPEAIGTPLTPSSLKVLLLGASELGRELAIALQRLGIEVHAADRYAGAPAHLVANKAHVLDIHDEDAIRQLVREVGPHFVIPDSETIPAEVLQEIETNEVASVVPTALANRLTMNREGIRTFAHDKLGLPNSTFRFASTADELARAAEEIGYPCVVKPVMSSSGAGQSYVGGVDELEAAWNAALKHSRTNAQRVMVEQYIPFDYEVTILAVRSIDPATGREATWFCEPIGHRQDRGDYVESWQPAHMSEDALDTARSIAARIATALGGRGVYGVELFVKGDDVYFSEVSPRLHDTGMVTLGTQRFSEFDLHARAILGLPIDTTLISPGASAVIRCEDKHDGDIEYAGVNKAMAVEETNIYLFGKPRALARRRMGVAVATAENIDQARQRAEEAAGYIEVRPTVFAEGGQ.

25–26 (EL) lines the N(1)-(5-phospho-beta-D-ribosyl)glycinamide pocket. Residues Arg-118, Lys-159, 164 to 169 (SSGAGQ), 199 to 202 (EQYI), and Glu-207 contribute to the ATP site. An ATP-grasp domain is found at 123 to 318 (TFAHDKLGLP…EFDLHARAIL (196 aa)). 2 residues coordinate Mg(2+): Glu-277 and Glu-289. Residues Asp-296, Lys-366, and 373-374 (RR) contribute to the N(1)-(5-phospho-beta-D-ribosyl)glycinamide site.

The protein belongs to the PurK/PurT family. Homodimer.

It catalyses the reaction N(1)-(5-phospho-beta-D-ribosyl)glycinamide + formate + ATP = N(2)-formyl-N(1)-(5-phospho-beta-D-ribosyl)glycinamide + ADP + phosphate + H(+). It participates in purine metabolism; IMP biosynthesis via de novo pathway; N(2)-formyl-N(1)-(5-phospho-D-ribosyl)glycinamide from N(1)-(5-phospho-D-ribosyl)glycinamide (formate route): step 1/1. Involved in the de novo purine biosynthesis. Catalyzes the transfer of formate to 5-phospho-ribosyl-glycinamide (GAR), producing 5-phospho-ribosyl-N-formylglycinamide (FGAR). Formate is provided by PurU via hydrolysis of 10-formyl-tetrahydrofolate. In Corynebacterium jeikeium (strain K411), this protein is Formate-dependent phosphoribosylglycinamide formyltransferase.